Here is a 215-residue protein sequence, read N- to C-terminus: ATP phosphoribosyltransferase (215 aa).

Belongs to the ATP phosphoribosyltransferase family. Short subfamily. As to quaternary structure, heteromultimer composed of HisG and HisZ subunits.

The protein localises to the cytoplasm. It carries out the reaction 1-(5-phospho-beta-D-ribosyl)-ATP + diphosphate = 5-phospho-alpha-D-ribose 1-diphosphate + ATP. It functions in the pathway amino-acid biosynthesis; L-histidine biosynthesis; L-histidine from 5-phospho-alpha-D-ribose 1-diphosphate: step 1/9. In terms of biological role, catalyzes the condensation of ATP and 5-phosphoribose 1-diphosphate to form N'-(5'-phosphoribosyl)-ATP (PR-ATP). Has a crucial role in the pathway because the rate of histidine biosynthesis seems to be controlled primarily by regulation of HisG enzymatic activity. The protein is ATP phosphoribosyltransferase of Prochlorococcus marinus (strain MIT 9215).